A 156-amino-acid polypeptide reads, in one-letter code: Small ribosomal subunit protein uS7c (156 aa).

It belongs to the universal ribosomal protein uS7 family. As to quaternary structure, part of the 30S ribosomal subunit.

The protein localises to the plastid. Its subcellular location is the chloroplast. One of the primary rRNA binding proteins, it binds directly to 16S rRNA where it nucleates assembly of the head domain of the 30S subunit. This Mesostigma viride (Green alga) protein is Small ribosomal subunit protein uS7c (rps7).